The chain runs to 408 residues: Acetate kinase (408 aa).

Asparagine 7 is a Mg(2+) binding site. Lysine 14 is an ATP binding site. Arginine 91 is a binding site for substrate. Aspartate 148 acts as the Proton donor/acceptor in catalysis. ATP is bound by residues 208–212 (HLGNG) and 283–285 (DLR). Glutamate 388 is a binding site for Mg(2+).

Belongs to the acetokinase family. In terms of assembly, homodimer. Mg(2+) is required as a cofactor. It depends on Mn(2+) as a cofactor.

The protein localises to the cytoplasm. It carries out the reaction acetate + ATP = acetyl phosphate + ADP. Its pathway is metabolic intermediate biosynthesis; acetyl-CoA biosynthesis; acetyl-CoA from acetate: step 1/2. Its function is as follows. Catalyzes the formation of acetyl phosphate from acetate and ATP. Can also catalyze the reverse reaction. The chain is Acetate kinase from Borrelia hermsii (strain HS1 / DAH).